A 546-amino-acid polypeptide reads, in one-letter code: CTP synthase (546 aa).

Positions 1–269 (MNPNTKIIFV…DAKLVELLNL (269 aa)) are amidoligase domain. Ser16 lines the CTP pocket. Residue Ser16 coordinates UTP. ATP-binding positions include 17–22 (SLGKGV) and Asp74. Positions 74 and 143 each coordinate Mg(2+). CTP contacts are provided by residues 150–152 (DIE), 190–195 (KTKPTQ), and Lys226. UTP-binding positions include 190–195 (KTKPTQ) and Lys226. The 253-residue stretch at 294–546 (TIAMVGKYVS…IHAAVEKSNK (253 aa)) folds into the Glutamine amidotransferase type-1 domain. Position 356 (Gly356) interacts with L-glutamine. The active-site Nucleophile; for glutamine hydrolysis is Cys383. Residues 384 to 387 (LGMQ), Glu407, and Arg474 each bind L-glutamine. Active-site residues include His519 and Glu521.

This sequence belongs to the CTP synthase family. In terms of assembly, homotetramer.

It catalyses the reaction UTP + L-glutamine + ATP + H2O = CTP + L-glutamate + ADP + phosphate + 2 H(+). It carries out the reaction L-glutamine + H2O = L-glutamate + NH4(+). The catalysed reaction is UTP + NH4(+) + ATP = CTP + ADP + phosphate + 2 H(+). The protein operates within pyrimidine metabolism; CTP biosynthesis via de novo pathway; CTP from UDP: step 2/2. Allosterically activated by GTP, when glutamine is the substrate; GTP has no effect on the reaction when ammonia is the substrate. The allosteric effector GTP functions by stabilizing the protein conformation that binds the tetrahedral intermediate(s) formed during glutamine hydrolysis. Inhibited by the product CTP, via allosteric rather than competitive inhibition. Its function is as follows. Catalyzes the ATP-dependent amination of UTP to CTP with either L-glutamine or ammonia as the source of nitrogen. Regulates intracellular CTP levels through interactions with the four ribonucleotide triphosphates. The chain is CTP synthase from Francisella philomiragia subsp. philomiragia (strain ATCC 25017 / CCUG 19701 / FSC 153 / O#319-036).